Reading from the N-terminus, the 491-residue chain is LETM1 domain-containing protein LETM2, mitochondrial (491 aa).

Residues 1 to 25 constitute a mitochondrion transit peptide; sequence MAFYSYNSVLAIARTRFPSHFVHPT. At 26–177 the chain is on the mitochondrial intermembrane side; sequence CSSYSPSCAF…LLRTCVDFFR (152 aa). The span at 94-109 shows a compositional bias: polar residues; the sequence is EQATKHPQVTSPQATK. The segment at 94–115 is disordered; it reads EQATKHPQVTSPQATKETGMEI. Residues 178–198 form a helical membrane-spanning segment; it reads LVPFMVFLIVPFMEFLLPVFL. The Mitochondrial matrix segment spans residues 199-491; the sequence is KLFPEMLPST…QNSKASSKGA (293 aa). A coiled-coil region spans residues 208–235; the sequence is TFESESKKEEKQKKKMAVKLELAKFLQE. The Letm1 RBD domain maps to 221-438; sequence KKMAVKLELA…LAPQLKGTKD (218 aa). Residues 435–491 are disordered; the sequence is GTKDEDFIQPPPVTSSPITPSTPISLPKGPITSSEEPTLQAKSQMTAQNSKASSKGA. Residues 449–461 are compositionally biased toward low complexity; it reads SSPITPSTPISLP. Over residues 465–491 the composition is skewed to polar residues; that stretch reads ITSSEEPTLQAKSQMTAQNSKASSKGA.

Its subcellular location is the mitochondrion inner membrane. This is LETM1 domain-containing protein LETM2, mitochondrial (LETM2) from Homo sapiens (Human).